The chain runs to 332 residues: 2,3-diketo-L-gulonate reductase (332 aa).

His-44 functions as the Proton donor in the catalytic mechanism. NAD(+) is bound by residues 168 to 174, 224 to 225, and 304 to 306; these read ITMVDMS, WK, and GHE.

This sequence belongs to the LDH2/MDH2 oxidoreductase family. DlgD subfamily. In terms of assembly, homodimer.

It is found in the cytoplasm. It catalyses the reaction 3-dehydro-L-gulonate + NAD(+) = 2,3-dioxo-L-gulonate + NADH + H(+). It carries out the reaction 3-dehydro-L-gulonate + NADP(+) = 2,3-dioxo-L-gulonate + NADPH + H(+). Catalyzes the reduction of 2,3-diketo-L-gulonate in the presence of NADH, to form 3-keto-L-gulonate. The sequence is that of 2,3-diketo-L-gulonate reductase from Salmonella typhi.